We begin with the raw amino-acid sequence, 104 residues long: Precursor of CEP11 (104 aa).

Residues 1–27 (MAKTRRVIYLFLTIVLLFCELIDEAQG) form the signal peptide. A propeptide spanning residues 28 to 85 (SRFRCHHSEDYSCKKRSSHHHHHHHHHQQQQHHHKDTPPEELQGSIKTRRSKDIYGLN) is cleaved from the precursor. The disordered stretch occupies residues 37–104 (DYSCKKRSSH…SPGVGHLIKT (68 aa)). Residues 41 to 62 (KKRSSHHHHHHHHHQQQQHHHK) are compositionally biased toward basic residues. Proline 92 and proline 96 each carry hydroxyproline. The propeptide occupies 101-104 (LIKT).

Belongs to the C-terminally encoded plant signaling peptide (CEP) family. Interacts with CEP receptors (e.g. CEPR1 and CEPR2). In terms of processing, the mature small signaling peptide is generated by proteolytic processing of the longer precursor. In terms of tissue distribution, expressed in lateral root primordia and in lateral roots excluding the meristem region.

The protein resides in the secreted. The protein localises to the extracellular space. It is found in the apoplast. Functionally, extracellular signaling peptide that may regulate primary root growth rate and systemic nitrogen (N)-demand signaling. Mediates up-regulation of genes involved in N uptake and assimilation pathways. In Arabidopsis thaliana (Mouse-ear cress), this protein is Precursor of CEP11.